A 235-amino-acid chain; its full sequence is Large ribosomal subunit protein uL1 (235 aa).

This sequence belongs to the universal ribosomal protein uL1 family. As to quaternary structure, part of the 50S ribosomal subunit.

In terms of biological role, binds directly to 23S rRNA. The L1 stalk is quite mobile in the ribosome, and is involved in E site tRNA release. Protein L1 is also a translational repressor protein, it controls the translation of the L11 operon by binding to its mRNA. This Parasynechococcus marenigrum (strain WH8102) protein is Large ribosomal subunit protein uL1.